Consider the following 450-residue polypeptide: 3-phosphoshikimate 1-carboxyvinyltransferase (450 aa).

Residues Lys-28, Ser-29, and Arg-33 each contribute to the 3-phosphoshikimate site. A phosphoenolpyruvate-binding site is contributed by Lys-28. 2 residues coordinate phosphoenolpyruvate: Gly-100 and Arg-128. Positions 173, 175, 326, and 353 each coordinate 3-phosphoshikimate. A phosphoenolpyruvate-binding site is contributed by Gln-175. Catalysis depends on Asp-326, which acts as the Proton acceptor. The phosphoenolpyruvate site is built by Arg-357 and Arg-402.

The protein belongs to the EPSP synthase family. Monomer.

The protein localises to the cytoplasm. It carries out the reaction 3-phosphoshikimate + phosphoenolpyruvate = 5-O-(1-carboxyvinyl)-3-phosphoshikimate + phosphate. The protein operates within metabolic intermediate biosynthesis; chorismate biosynthesis; chorismate from D-erythrose 4-phosphate and phosphoenolpyruvate: step 6/7. Catalyzes the transfer of the enolpyruvyl moiety of phosphoenolpyruvate (PEP) to the 5-hydroxyl of shikimate-3-phosphate (S3P) to produce enolpyruvyl shikimate-3-phosphate and inorganic phosphate. In Brucella canis (strain ATCC 23365 / NCTC 10854 / RM-666), this protein is 3-phosphoshikimate 1-carboxyvinyltransferase.